The chain runs to 398 residues: Organelle RRM domain-containing protein 1, chloroplastic (398 aa).

Residues 1 to 88 (MDTALPSVLI…RWVVVMDTPP (88 aa)) constitute a chloroplast transit peptide. Residues 54–70 (LLASSSESPPAQLAAAS) are compositionally biased toward low complexity. Residues 54–79 (LLASSSESPPAQLAAASTESQSRSSR) are disordered. The RRM domain occupies 299-377 (KRLFVTGLSF…WMIVVDVAKT (79 aa)).

It is found in the plastid. The protein resides in the chloroplast. In terms of biological role, involved in C-to-U editing of chloroplastic RNA. Functions as major chloroplastic editing factor. Controls a majority of the chloroplastic editing sites. The sequence is that of Organelle RRM domain-containing protein 1, chloroplastic (ORRM1) from Zea mays (Maize).